The following is a 279-amino-acid chain: Energy-coupling factor transporter ATP-binding protein EcfA1 (279 aa).

In terms of domain architecture, ABC transporter spans 5–240; that stretch reads IELKKVTFNY…GDELLQLGLD (236 aa). Position 40 to 47 (40 to 47) interacts with ATP; that stretch reads GHNGSGKS.

It belongs to the ABC transporter superfamily. Energy-coupling factor EcfA family. As to quaternary structure, forms a stable energy-coupling factor (ECF) transporter complex composed of 2 membrane-embedded substrate-binding proteins (S component), 2 ATP-binding proteins (A component) and 2 transmembrane proteins (T component).

It is found in the cell membrane. ATP-binding (A) component of a common energy-coupling factor (ECF) ABC-transporter complex. Unlike classic ABC transporters this ECF transporter provides the energy necessary to transport a number of different substrates. The sequence is that of Energy-coupling factor transporter ATP-binding protein EcfA1 from Streptococcus pyogenes serotype M12 (strain MGAS2096).